Here is a 199-residue protein sequence, read N- to C-terminus: MSEEQILNTHNASILLSAANKSHYPQDDLPEIALAGRSNVGKSSFINTILGRKSLARTSSKPGKTQLLNFFNVDDKLRLVDVPGYGYAKVSKAERARWGKMIEEYLTTRQNLRAVVSLVDFRHEPSQDDIQMYEFLKYYEIPVIIVATKADKVPRGRWNKHESMVKKSLNFDQTDAFIIFSSVERIGIDESWDTILEYL.

The region spanning 28–199 is the EngB-type G domain; sequence DLPEIALAGR…ESWDTILEYL (172 aa). Residues 36 to 43, 63 to 67, 81 to 84, 148 to 151, and 180 to 182 each bind GTP; these read GRSNVGKS, GKTQL, DVPG, TKAD, and FSS. Ser-43 and Thr-65 together coordinate Mg(2+).

It belongs to the TRAFAC class TrmE-Era-EngA-EngB-Septin-like GTPase superfamily. EngB GTPase family. It depends on Mg(2+) as a cofactor.

Necessary for normal cell division and for the maintenance of normal septation. The protein is Probable GTP-binding protein EngB of Streptococcus equi subsp. zooepidemicus (strain H70).